The sequence spans 1178 residues: MQYVNGMDIVKSVYDEVKYLINYTTMPWTDLGEYEECSVQSIENPTEEGLIFKCIGEINTSPEIPLNVLYNANLQQIWDELCIESKKIEQLDSCNSVDYYSFGSPLGGAPRDFVFLRNFSVDFENKSAWVVIRSIHHESIPSPTYMKPSGWEFLQISPNKTRITLVVQINDLTIAPYLRINSVDLKRIYRNTGIQITHTLPNLIKYIKKNYKKEIENNFKKFKTPDLFNPNLNNNNNNNNNNNNNNNNNNNNNNNNNNNNNNNNQQQNIKNSNSNENNNNNSDSITNSNSNENLNEKDGKKILLPQLSEEFEFLDVDEELYDVDKTPTFMFKETSKTVGELEVNPVETGWNCFRKFNDYTFYYRDYDENSLDFACSGSSFIDASAEVIFSYIFSEYSCKIDQWTCGMKTLKKLDQVTSLERMSFRSVLAPKDVLSAVLVKQVNYFQKGIIFLGYRSLLKPSTIVKTGFWYSPSAYYIIPQERGCIIRYILKFRMYLPPSTYKIYPKKQILYVISEKTRATVEMIKYYSINPFYLHKRKQQEFPHWEGIDKFSELAEIFSNIQIRHSKPSLIINSPPNSNNHENEKKRKFRDNGINSTSISIPSTQFCFSSGGGSGGSSSSSSSTSSSLTFSPPQQLSSPTSSSSSSTFSNDSALIDNNQQLDINNNNDQEYLRFSENWESYITRKPFLLLISSGLHLRKPPKKKSPRYLESHNLKTCSLFDLLPYEMIQYIFTLMDATHLIRMSRTCKYFNRICLDDNIWRDLYNREFTKNSSDSLFKWSSIEDINLGTEKKQLLDLTFDHSKKKSNNSSPLSASSSSSSPSPPLLPPPPPPIPQLPDMLLENNNKYNNREQIQKNEHYWLNMFREKETINRHWRAGNGKVSNLRGHKGKISCLQMAPNQIFTGSKDKEFKSWNIATKQCESTTRCGASSVISFEKDNFTKLSTDIFPYCLFMHGIIRLGCSNGAIQHYNIATKEIEKEQRFLYVSNGFIFMKRDIYSYESNTVKLYDSETEQELQMIEIENTKINHCKIGRFENFCMIACTDKTVKLWDIDSNKTELVLNGHKGSVNCLDFLNDYQLITGSSDKTIRMWDIRNPSSAIHNIKSHSSKVKAISIYNNLRMCTGDEDSICLWNLEGSNEPNLLTTINNLSPVECLSIDDETMLAGFSDGEVSYYDFNSK.

Positions Met-1–Lys-208 constitute an START domain. 3 disordered regions span residues Lys-223 to Glu-296, Ser-569 to Ile-594, and Ser-618 to Ser-649. 2 stretches are compositionally biased toward low complexity: residues Asn-229–Asn-293 and Ile-571–Asn-580. The region spanning Cys-717–Leu-763 is the F-box domain. The segment at Lys-804–Leu-841 is disordered. Over residues Ser-809–Ser-820 the composition is skewed to low complexity. Pro residues predominate over residues Pro-821 to Gln-835. 7 WD repeats span residues Gly-886–Thr-923, Arg-925–Glu-979, Arg-981–Met-1017, Ile-1020–Val-1059, Gly-1062–His-1100, Ser-1104–Leu-1141, and Asn-1146–Lys-1178.

Its function is as follows. Substrate recognition component of a SCF (SKP1-CUL1-F-box protein) E3 ubiquitin-protein ligase complex which mediates the ubiquitination and subsequent proteasomal degradation of target proteins. The polypeptide is F-box/WD repeat-containing protein A-like protein (Dictyostelium discoideum (Social amoeba)).